Here is a 113-residue protein sequence, read N- to C-terminus: Large ribosomal subunit protein uL22 (113 aa).

This sequence belongs to the universal ribosomal protein uL22 family. Part of the 50S ribosomal subunit.

Functionally, this protein binds specifically to 23S rRNA; its binding is stimulated by other ribosomal proteins, e.g. L4, L17, and L20. It is important during the early stages of 50S assembly. It makes multiple contacts with different domains of the 23S rRNA in the assembled 50S subunit and ribosome. In terms of biological role, the globular domain of the protein is located near the polypeptide exit tunnel on the outside of the subunit, while an extended beta-hairpin is found that lines the wall of the exit tunnel in the center of the 70S ribosome. The sequence is that of Large ribosomal subunit protein uL22 from Magnetococcus marinus (strain ATCC BAA-1437 / JCM 17883 / MC-1).